The chain runs to 1047 residues: Carbamoyl phosphate synthase arginine-specific large chain (1047 aa).

A carboxyphosphate synthetic domain region spans residues 1–401 (MPKRTDIQSV…GLQKAVRSLE (401 aa)). Positions 129, 169, 175, 176, 208, 210, 215, 241, 242, 243, 284, and 298 each coordinate ATP. Residues 133–327 (RQLMHELHEP…IARMAAKLSL (195 aa)) enclose the ATP-grasp 1 domain. Mg(2+) is bound by residues Gln284, Glu298, and Asn300. Positions 284, 298, and 300 each coordinate Mn(2+). The interval 402–549 (IKTHGLSLPS…YSSWTGENDL (148 aa)) is oligomerization domain. The interval 550 to 933 (LLPEKAKERV…AFRKAFAWGE (384 aa)) is carbamoyl phosphate synthetic domain. Residues 676 to 865 (YEFMRSVEVP…LITYTIDVLF (190 aa)) enclose the ATP-grasp 2 domain. The ATP site is built by Arg712, Ala750, Glu756, Gly781, Val782, His783, Ser784, Gln824, and Glu836. Positions 824, 836, and 838 each coordinate Mg(2+). Gln824, Glu836, and Asn838 together coordinate Mn(2+). The tract at residues 934 to 1047 (EQTPALFRKK…PFLLPDVVMN (114 aa)) is allosteric domain. In terms of domain architecture, MGS-like spans 937 to 1047 (PALFRKKGSV…PFLLPDVVMN (111 aa)).

This sequence belongs to the CarB family. Composed of two chains; the small (or glutamine) chain promotes the hydrolysis of glutamine to ammonia, which is used by the large (or ammonia) chain to synthesize carbamoyl phosphate. Tetramer of heterodimers (alpha,beta)4. The cofactor is Mg(2+). Mn(2+) is required as a cofactor.

It catalyses the reaction hydrogencarbonate + L-glutamine + 2 ATP + H2O = carbamoyl phosphate + L-glutamate + 2 ADP + phosphate + 2 H(+). The catalysed reaction is hydrogencarbonate + NH4(+) + 2 ATP = carbamoyl phosphate + 2 ADP + phosphate + 2 H(+). It participates in amino-acid biosynthesis; L-arginine biosynthesis; carbamoyl phosphate from bicarbonate: step 1/1. Large subunit of the glutamine-dependent carbamoyl phosphate synthetase (CPSase). CPSase catalyzes the formation of carbamoyl phosphate from the ammonia moiety of glutamine, carbonate, and phosphate donated by ATP, constituting the first step of the biosynthetic pathway leading to arginine and/or urea. The large subunit (synthetase) binds the substrates ammonia (free or transferred from glutamine from the small subunit), hydrogencarbonate and ATP and carries out an ATP-coupled ligase reaction, activating hydrogencarbonate by forming carboxy phosphate which reacts with ammonia to form carbamoyl phosphate. This is Carbamoyl phosphate synthase arginine-specific large chain from Halalkalibacterium halodurans (strain ATCC BAA-125 / DSM 18197 / FERM 7344 / JCM 9153 / C-125) (Bacillus halodurans).